The primary structure comprises 213 residues: MSLNLADIRLEYSKKELSPEDCLPDAVAQFEIWLNEAIAAQVPEPTAMNLAAIGADGRPSSRIVLLKGVEDGQLLFYTNYQSRKGQALEANPYVALNFFWPELERQVRIEGKAARVAPEVSDAYFASRPYTSRLGAWASEQSREIASKATLVTRAAMFGARYPINVPRPPHWGGFAVVPDRVEFWQGRPSRLHDRVLYTLQPDGGWSRSRLAP.

Substrate-binding positions include 9–12 (RLEY) and Lys-67. Residues 62–67 (RIVLLK), 77–78 (YT), Arg-83, Lys-84, and Gln-106 contribute to the FMN site. Residues Tyr-124, Arg-128, and Ser-132 each coordinate substrate. FMN contacts are provided by residues 141-142 (QS) and Trp-185. 191–193 (RLH) lines the substrate pocket. Arg-195 provides a ligand contact to FMN.

The protein belongs to the pyridoxamine 5'-phosphate oxidase family. Homodimer. The cofactor is FMN.

The enzyme catalyses pyridoxamine 5'-phosphate + O2 + H2O = pyridoxal 5'-phosphate + H2O2 + NH4(+). It catalyses the reaction pyridoxine 5'-phosphate + O2 = pyridoxal 5'-phosphate + H2O2. It functions in the pathway cofactor metabolism; pyridoxal 5'-phosphate salvage; pyridoxal 5'-phosphate from pyridoxamine 5'-phosphate: step 1/1. It participates in cofactor metabolism; pyridoxal 5'-phosphate salvage; pyridoxal 5'-phosphate from pyridoxine 5'-phosphate: step 1/1. In terms of biological role, catalyzes the oxidation of either pyridoxine 5'-phosphate (PNP) or pyridoxamine 5'-phosphate (PMP) into pyridoxal 5'-phosphate (PLP). This Chromobacterium violaceum (strain ATCC 12472 / DSM 30191 / JCM 1249 / CCUG 213 / NBRC 12614 / NCIMB 9131 / NCTC 9757 / MK) protein is Pyridoxine/pyridoxamine 5'-phosphate oxidase.